The chain runs to 453 residues: MEKALELDGEYPESLRDEFNIPTFKSMGLSSDDKPVTYLCGNSLGLMPKSTRNSINAELDAWSDCAVESHFKHPEEARGKVPWVSIDLPILPLLAPIVGAQENEVAVMNSLTANLNSLLITFYKPTEKRFKILFEKGSFPSDYYAFYNQCKIHGISEPENVFIQIEPREGETYIRTQDILDTIEVNQDELALVCLSGVQYYTGQYFDIGRITSFAHQFPDILVGWDLAHAVGNVPLQLHDWGVDFACWCSYKYLNAGPGGIGGLFVHSKHTKPDPAKESLPRLAGWWGNDPAKRFQMLEVFEPIPGALGFRQSNPSVIDTVALRSSLELFAKFNGINEVRKRSLLLTNYMTELLEASKYYKHPLRIEKLPCFFTILTPTSTDEEHGAQLSLYFDSDTGKEDIMPKVFQYLHDHGVIGDARRPNVIRLAPAPLYNTFSDVYIAVNALNEAMDKL.

Residues L111, T112, 139–142, S196, D226, H229, and Y251 contribute to the pyridoxal 5'-phosphate site; that span reads FPSD. K252 is subject to N6-(pyridoxal phosphate)lysine. Residues W286 and N314 each coordinate pyridoxal 5'-phosphate.

Belongs to the kynureninase family. Homodimer. The cofactor is pyridoxal 5'-phosphate.

The protein resides in the cytoplasm. It localises to the nucleus. It carries out the reaction L-kynurenine + H2O = anthranilate + L-alanine + H(+). The catalysed reaction is 3-hydroxy-L-kynurenine + H2O = 3-hydroxyanthranilate + L-alanine + H(+). It functions in the pathway amino-acid degradation; L-kynurenine degradation; L-alanine and anthranilate from L-kynurenine: step 1/1. It participates in cofactor biosynthesis; NAD(+) biosynthesis; quinolinate from L-kynurenine: step 2/3. Functionally, catalyzes the cleavage of L-kynurenine (L-Kyn) and L-3-hydroxykynurenine (L-3OHKyn) into anthranilic acid (AA) and 3-hydroxyanthranilic acid (3-OHAA), respectively. The polypeptide is Kynureninase (Saccharomyces cerevisiae (strain ATCC 204508 / S288c) (Baker's yeast)).